Here is a 177-residue protein sequence, read N- to C-terminus: Large ribosomal subunit protein uL6 (177 aa).

This sequence belongs to the universal ribosomal protein uL6 family. Part of the 50S ribosomal subunit.

Functionally, this protein binds to the 23S rRNA, and is important in its secondary structure. It is located near the subunit interface in the base of the L7/L12 stalk, and near the tRNA binding site of the peptidyltransferase center. This chain is Large ribosomal subunit protein uL6, found in Herminiimonas arsenicoxydans.